Reading from the N-terminus, the 748-residue chain is E3 ubiquitin-protein ligase DTX3L (748 aa).

Ala-2 is modified (N-acetylalanine). Ser-9 carries the post-translational modification Phosphoserine. Disordered stretches follow at residues 94–117 (DLRP…PSLT), 209–238 (EQKR…PPDQ), and 528–562 (QETP…PAAS). Positions 101–117 (SLTQPVETPSSRPPSLT) are enriched in polar residues. Basic and acidic residues-rich tracts occupy residues 209-219 (EQKRKGSEQKR) and 227-236 (TPPDVEREPP). A Phosphoserine modification is found at Ser-215. At Ser-536 the chain carries Phosphoserine. The RING-type zinc-finger motif lies at 569–608 (CVICMDTISNKHVLPKCKHEFCTSCISKAMLIKPVCPVCL).

Belongs to the Deltex family. As to quaternary structure, homodimer and heterodimer. Can heterodimerize with DTX1, enhancing its ubiquitin ligase activity in vitro. Interacts (via N-terminus) with ADP ribosyltransferase PARP9/BAL1 (via PARP catalytic domain) forming a stable complex; the interaction is required to activate PARP9 but is dispensable for DTX3L catalytic activity. Forms a complex with STAT1 and PARP9 independently of IFNB1 or IFNG-mediated STAT1 'Tyr-701' phosphorylation. Found in a complex with PARP9, STAT1 and H2BC9. Found in a complex with E3 ligase ITCH and ESCRT-0 components HGS and STAM. Interacts (via C-terminus) with ITCH; the interaction is increased upon CXCL12 stimulation and inhibits ITCH catalytic activity; the interaction is direct. Interacts with HGS and STAM; the interaction brings together HGS and STAM and promotes their recruitment to early endosomes. Post-translationally, autoubiquitinated.

Its subcellular location is the cytoplasm. It localises to the nucleus. It is found in the early endosome membrane. The protein resides in the lysosome membrane. The enzyme catalyses S-ubiquitinyl-[E2 ubiquitin-conjugating enzyme]-L-cysteine + [acceptor protein]-L-lysine = [E2 ubiquitin-conjugating enzyme]-L-cysteine + N(6)-ubiquitinyl-[acceptor protein]-L-lysine.. The protein operates within protein modification; protein ubiquitination. With respect to regulation, binding to PARP9 enhances DTX3L catalytic activity. In terms of biological role, E3 ubiquitin-protein ligase which, in association with ADP-ribosyltransferase PARP9, plays a role in DNA damage repair and in interferon-mediated antiviral responses. Monoubiquitinates several histones, including histone H2A, H2B, H3 and H4. In response to DNA damage, mediates monoubiquitination of 'Lys-91' of histone H4 (H4K91ub1). The exact role of H4K91ub1 in DNA damage response is still unclear but it may function as a licensing signal for additional histone H4 post-translational modifications such as H4 'Lys-20' methylation (H4K20me). PARP1-dependent PARP9-DTX3L-mediated ubiquitination promotes the rapid and specific recruitment of 53BP1/TP53BP1, UIMC1/RAP80, and BRCA1 to DNA damage sites. By monoubiquitinating histone H2B H2BC9/H2BJ and thereby promoting chromatin remodeling, positively regulates STAT1-dependent interferon-stimulated gene transcription and thus STAT1-mediated control of viral replication. Independently of its catalytic activity, promotes the sorting of chemokine receptor CXCR4 from early endosome to lysosome following CXCL12 stimulation by reducing E3 ligase ITCH activity and thus ITCH-mediated ubiquitination of endosomal sorting complex required for transport ESCRT-0 components HGS and STAM. In addition, required for the recruitment of HGS and STAM to early endosomes. This Mus musculus (Mouse) protein is E3 ubiquitin-protein ligase DTX3L (Dtx3l).